A 353-amino-acid chain; its full sequence is Uroporphyrinogen decarboxylase (353 aa).

Substrate is bound by residues 26 to 30, Asp76, Tyr153, Thr208, and His326; that span reads RQAGR.

It belongs to the uroporphyrinogen decarboxylase family. In terms of assembly, homodimer.

It is found in the cytoplasm. It carries out the reaction uroporphyrinogen III + 4 H(+) = coproporphyrinogen III + 4 CO2. The protein operates within porphyrin-containing compound metabolism; protoporphyrin-IX biosynthesis; coproporphyrinogen-III from 5-aminolevulinate: step 4/4. Its function is as follows. Catalyzes the decarboxylation of four acetate groups of uroporphyrinogen-III to yield coproporphyrinogen-III. This is Uroporphyrinogen decarboxylase from Chromohalobacter salexigens (strain ATCC BAA-138 / DSM 3043 / CIP 106854 / NCIMB 13768 / 1H11).